The sequence spans 201 residues: dCTP deaminase, dUMP-forming (201 aa).

DCTP-binding positions include 101–106, Asp-119, 127–129, Gln-148, Tyr-162, and Gln-174; these read KSSLGR and TLE. Glu-129 serves as the catalytic Proton donor/acceptor. The segment covering 166–183 has biased composition (polar residues); the sequence is EYSSRYQGQRGPTASRSF. The interval 166–201 is disordered; it reads EYSSRYQGQRGPTASRSFLNFHRTDVSGTEAGRSSS.

It belongs to the dCTP deaminase family. As to quaternary structure, homotrimer.

It catalyses the reaction dCTP + 2 H2O = dUMP + NH4(+) + diphosphate. It functions in the pathway pyrimidine metabolism; dUMP biosynthesis; dUMP from dCTP: step 1/1. Bifunctional enzyme that catalyzes both the deamination of dCTP to dUTP and the hydrolysis of dUTP to dUMP without releasing the toxic dUTP intermediate. The polypeptide is dCTP deaminase, dUMP-forming (Leifsonia xyli subsp. xyli (strain CTCB07)).